The sequence spans 730 residues: Polyphosphate kinase (730 aa).

Positions 1 to 21 (MMRHDRNVTEIDAETRPDENL) are enriched in basic and acidic residues. Residues 1–39 (MMRHDRNVTEIDAETRPDENLWHSGDSAVGAPPAATPAA) form a disordered region. Residue asparagine 86 participates in ATP binding. The Mg(2+) site is built by arginine 423 and arginine 453. Histidine 483 serves as the catalytic Phosphohistidine intermediate. Tyrosine 516, arginine 612, and histidine 640 together coordinate ATP.

The protein belongs to the polyphosphate kinase 1 (PPK1) family. It depends on Mg(2+) as a cofactor. In terms of processing, an intermediate of this reaction is the autophosphorylated ppk in which a phosphate is covalently linked to a histidine residue through a N-P bond.

The enzyme catalyses [phosphate](n) + ATP = [phosphate](n+1) + ADP. Catalyzes the reversible transfer of the terminal phosphate of ATP to form a long-chain polyphosphate (polyP). This Mycolicibacterium paratuberculosis (strain ATCC BAA-968 / K-10) (Mycobacterium paratuberculosis) protein is Polyphosphate kinase.